The primary structure comprises 474 residues: 3-isopropylmalate dehydratase large subunit (474 aa).

[4Fe-4S] cluster contacts are provided by cysteine 352, cysteine 413, and cysteine 416.

The protein belongs to the aconitase/IPM isomerase family. LeuC type 1 subfamily. As to quaternary structure, heterodimer of LeuC and LeuD. [4Fe-4S] cluster serves as cofactor.

It carries out the reaction (2R,3S)-3-isopropylmalate = (2S)-2-isopropylmalate. The protein operates within amino-acid biosynthesis; L-leucine biosynthesis; L-leucine from 3-methyl-2-oxobutanoate: step 2/4. Its function is as follows. Catalyzes the isomerization between 2-isopropylmalate and 3-isopropylmalate, via the formation of 2-isopropylmaleate. This Pseudomonas savastanoi pv. phaseolicola (strain 1448A / Race 6) (Pseudomonas syringae pv. phaseolicola (strain 1448A / Race 6)) protein is 3-isopropylmalate dehydratase large subunit.